The primary structure comprises 1199 residues: AP-3 complex subunit delta-1 (1199 aa).

Residue A2 is modified to N-acetylalanine. HEAT repeat units follow at residues 34 to 71 (KYIS…LGYD), 142 to 179 (DLAR…KYPE), 180 to 216 (SLRP…RNPK), 218 to 254 (YLSL…LEPR), 257 to 296 (KKLI…GMPN), 298 to 336 (SASI…THPK), 337 to 373 (SVQS…KKNL), 375 to 409 (EIVK…QSNY), and 521 to 558 (VYVQ…ERLP). Disordered regions lie at residues 623 to 695 (LDAW…RYQD) and 724 to 963 (YVKL…EPIP). Phosphoserine is present on residues S632, S634, and S636. Basic and acidic residues-rich tracts occupy residues 639–651 (EKPK…EEPR) and 665–675 (LARRREARKQE). Residues 659–679 (EEDEEELARRREARKQEQANN) adopt a coiled-coil conformation. The residue at position 688 (S688) is a Phosphoserine. Residues 722-750 (DQYVKLEEQRRHRQRLEKDKKRKKKEKGK) are a coiled coil. A compositionally biased stretch (basic residues) spans 732–754 (RHRQRLEKDKKRKKKEKGKRRHS). 2 positions are modified to phosphoserine: S754 and S755. Phosphothreonine is present on T758. Residues S760, S784, and S825 each carry the phosphoserine modification. The span at 773–790 (ITEEMPENALPSDEDDKD) shows a compositional bias: acidic residues. The segment covering 791–836 (PNDPYRALDIDLDKPLADSEKLPVQKHRNAEAVKSPEKEGVLGVEK) has biased composition (basic and acidic residues). Residues 837–846 (KSKKPKKKEK) show a composition bias toward basic residues. The stretch at 843–863 (KKEKKTKEREREKKDKKGEDL) forms a coiled coil. The segment covering 847 to 862 (KTKEREREKKDKKGED) has biased composition (basic and acidic residues). Pro residues predominate over residues 870–880 (TPPPAAAPIPA). Basic and acidic residues predominate over residues 894 to 916 (PKDECEVLKGEEEDHVDHDQERK). The stretch at 911 to 934 (HDQERKSSRHKKKKHRKEKEKEER) forms a coiled coil. A compositionally biased stretch (basic residues) spans 917 to 928 (SSRHKKKKHRKE).

The protein belongs to the adaptor complexes large subunit family. Adaptor protein complex 3 (AP-3) is a heterotetramer composed of two large adaptins (delta-type subunit AP3D1 and beta-type subunit AP3B1 or AP3B2), a medium adaptin (mu-type subunit AP3M1 or AP3M2) and a small adaptin (sigma-type subunit APS1 or AP3S2). AP-3 associates with the BLOC-1 complex. Interacts with SLC30A2. Interacts with CLN3 (via dileucine motif); this interaction facilitates lysosomal targeting.

The protein resides in the cytoplasm. Its subcellular location is the golgi apparatus membrane. In terms of biological role, part of the AP-3 complex, an adaptor-related complex which is not clathrin-associated. The complex is associated with the Golgi region as well as more peripheral structures. It facilitates the budding of vesicles from the Golgi membrane and may be directly involved in trafficking to lysosomes. Involved in process of CD8+ T-cell and NK cell degranulation. In concert with the BLOC-1 complex, AP-3 is required to target cargos into vesicles assembled at cell bodies for delivery into neurites and nerve terminals. This Mus musculus (Mouse) protein is AP-3 complex subunit delta-1 (Ap3d1).